The sequence spans 117 residues: Large ribosomal subunit protein bL19 (117 aa).

Belongs to the bacterial ribosomal protein bL19 family.

In terms of biological role, this protein is located at the 30S-50S ribosomal subunit interface and may play a role in the structure and function of the aminoacyl-tRNA binding site. The polypeptide is Large ribosomal subunit protein bL19 (Exiguobacterium sibiricum (strain DSM 17290 / CCUG 55495 / CIP 109462 / JCM 13490 / 255-15)).